Here is a 278-residue protein sequence, read N- to C-terminus: Sulfur carrier protein FdhD (278 aa).

Catalysis depends on Cys121, which acts as the Cysteine persulfide intermediate. Residue 260 to 265 coordinates Mo-bis(molybdopterin guanine dinucleotide); it reads FCKPGR.

This sequence belongs to the FdhD family.

The protein resides in the cytoplasm. In terms of biological role, required for formate dehydrogenase (FDH) activity. Acts as a sulfur carrier protein that transfers sulfur from IscS to the molybdenum cofactor prior to its insertion into FDH. The polypeptide is Sulfur carrier protein FdhD (Salmonella agona (strain SL483)).